We begin with the raw amino-acid sequence, 261 residues long: MGRVIRAQRKGEGSVFTAHTKKRKGEPKLRALDYAERHGYLKGTVKQIIHDPGRGAPLAVVHFRDPYKFNVRKQLFIAAEGMYTGQFVYCGKRAQLQIGNVLPIGLMPEGTIVCNLEEKTGDRGKLARTSGNYASVIAHNPDTKRTRVKLPSGAKKVLPSANRAMVGIVAGGGRIDKPILKAGRAYRKYKVKRNCWPKVRGVAMNPVEHPHGGGNHQHIGKASTVKRGTPPGRKVGLIAARRTGRIRGGKGDEKFKEKEKK.

Residues V207–R233 are disordered.

Belongs to the universal ribosomal protein uL2 family.

Its subcellular location is the cytoplasm. The polypeptide is Large ribosomal subunit protein uL2 (RpL8) (Aedes albopictus (Asian tiger mosquito)).